Consider the following 118-residue polypeptide: Nitrogenase-stabilizing/protective protein NifW (118 aa).

It belongs to the NifW family. Homotrimer; associates with NifD.

In terms of biological role, may protect the nitrogenase Fe-Mo protein from oxidative damage. The protein is Nitrogenase-stabilizing/protective protein NifW of Rhodopseudomonas palustris (strain BisB5).